A 176-amino-acid polypeptide reads, in one-letter code: Ribosome maturation factor RimM (176 aa).

Positions 92–165 (EDEFLYSDLI…RLVVVPPVYA (74 aa)) constitute a PRC barrel domain.

This sequence belongs to the RimM family. In terms of assembly, binds ribosomal protein uS19.

The protein localises to the cytoplasm. In terms of biological role, an accessory protein needed during the final step in the assembly of 30S ribosomal subunit, possibly for assembly of the head region. Essential for efficient processing of 16S rRNA. May be needed both before and after RbfA during the maturation of 16S rRNA. It has affinity for free ribosomal 30S subunits but not for 70S ribosomes. This chain is Ribosome maturation factor RimM, found in Paramagnetospirillum magneticum (strain ATCC 700264 / AMB-1) (Magnetospirillum magneticum).